The sequence spans 222 residues: Histone H1.5 (222 aa).

Residues 1 to 16 (MSETAPAETTAPAPVE) are compositionally biased toward low complexity. Positions 1-55 (MSETAPAETTAPAPVEKSPAKKKTKKAGAAKRKATGPPVSELITKAVSASKERGG) are disordered. An N-acetylserine modification is found at S2. A Phosphoserine modification is found at S2. An N6-acetyllysine modification is found at K17. S18 carries the phosphoserine modification. Residues 20-34 (AKKKTKKAGAAKRKA) show a composition bias toward basic residues. K26 is subject to N6-methyllysine. K33 carries the N6-(beta-hydroxybutyryl)lysine; alternate modification. K33 is subject to N6-succinyllysine; alternate. T35 bears the Phosphothreonine mark. The 74-residue stretch at 35–108 (TGPPVSELIT…GASGSFKLNK (74 aa)) folds into the H15 domain. K45 is modified (N6-acetyllysine). Position 51 is an N6-(beta-hydroxybutyryl)lysine (K51). Position 53 is a citrulline (R53). K63 carries the post-translational modification N6-(beta-hydroxybutyryl)lysine. K74 is modified (N6-acetyllysine). An N6-(beta-hydroxybutyryl)lysine mark is found at K84, K89, and K105. Residues 94-222 (QTKGTGASGS…KVKKAVSKKK (129 aa)) are disordered. Residues 118–129 (KAKKTGAAKAKK) are compositionally biased toward basic residues. Phosphothreonine occurs at positions 134 and 151. Over residues 136-157 (KKPKKTAGAKKTVKKTPKKAKK) the composition is skewed to basic residues. Position 164 is an N6-acetyllysine (K164). Over residues 165 to 183 (KVTKSPKKAKAAAKPKKAT) the composition is skewed to basic residues. S169 and S185 each carry phosphoserine. A compositionally biased stretch (basic residues) spans 190 to 222 (KAVKSKASKPKVTKPKAAKPKAAKVKKAVSKKK).

Belongs to the histone H1/H5 family. In terms of assembly, interacts with MSX1. Post-translationally, H1 histones are progressively phosphorylated during the cell cycle, becoming maximally phosphorylated during late G2 phase and M phase, and being dephosphorylated sharply thereafter. Citrullination at Arg-53 (H1R54ci) by PADI4 takes place within the DNA-binding site of H1 and results in its displacement from chromatin and global chromatin decondensation, thereby promoting pluripotency and stem cell maintenance.

It is found in the nucleus. Its subcellular location is the chromosome. Histone H1 protein binds to linker DNA between nucleosomes forming the macromolecular structure known as the chromatin fiber. Histones H1 are necessary for the condensation of nucleosome chains into higher-order structured fibers. Also acts as a regulator of individual gene transcription through chromatin remodeling, nucleosome spacing and DNA methylation. The sequence is that of Histone H1.5 (H1-5) from Rattus norvegicus (Rat).